A 48-amino-acid chain; its full sequence is Large ribosomal subunit protein bL33A (48 aa).

The protein belongs to the bacterial ribosomal protein bL33 family.

This is Large ribosomal subunit protein bL33A from Bacillus mycoides (strain KBAB4) (Bacillus weihenstephanensis).